The following is a 373-amino-acid chain: ORC1-type DNA replication protein 2 (373 aa).

Residues 63 to 67, Tyr-205, and Arg-217 each bind ATP; that span reads TGKTS.

Belongs to the CDC6/cdc18 family.

Its function is as follows. Involved in regulation of DNA replication. The polypeptide is ORC1-type DNA replication protein 2 (cdc6-2) (Methanosarcina mazei (strain ATCC BAA-159 / DSM 3647 / Goe1 / Go1 / JCM 11833 / OCM 88) (Methanosarcina frisia)).